The primary structure comprises 539 residues: Glycine betaine transporter 2 (539 aa).

12 helical membrane passes run 44 to 64, 85 to 105, 129 to 149, 175 to 195, 231 to 251, 265 to 285, 299 to 319, 348 to 368, 380 to 400, 426 to 446, 480 to 500, and 503 to 523; these read LTNPVFWLSGSFLSLFVLLAL, FGAYWQVLLLLNFLIGLALAF, IVLCTLLAGGGVFWAAAEPIA, FMHWGFLAWAILGCLSSIVLM, CSIIAVAAGTIGPIGFLGLQI, FITQSMVIVAAIVMYTLSALS, IILSVLLIGYILFFGPTSFII, WWTVFFWGWFIGYGPMMAIFI, LILSISIAAPLITCFWFSIVG, VLLAITGELPFPMIISVLFLI, FWGLMMGVVAIALISMGSGGI, and LQSFIVITAVPVSFILLPSIL.

This sequence belongs to the BCCT transporter (TC 2.A.15) family.

Its subcellular location is the cell inner membrane. Its function is as follows. Involved in the uptake of the osmoprotectant glycine betaine. In Vibrio parahaemolyticus serotype O3:K6 (strain RIMD 2210633), this protein is Glycine betaine transporter 2.